We begin with the raw amino-acid sequence, 724 residues long: Transcription factor dcp-66 (724 aa).

Composition is skewed to polar residues over residues 1–12 (MAQVQQVPSSPM) and 56–70 (GAST…QLSP). Disordered stretches follow at residues 1 to 23 (MAQV…GNGL) and 55 to 129 (NGAS…KRRL). The span at 85–95 (AQEKIKLKDDI) shows a compositional bias: basic and acidic residues. Positions 105 to 119 (DDDDMEDEELGDEIN) are enriched in acidic residues. A coiled-coil region spans residues 186 to 216 (EEQLRERLNMRREAENQLREEEAKLLVLRKM). Disordered stretches follow at residues 328–361 (KELS…QITQ) and 523–590 (AAPA…QLQQ). Residues 332-358 (AAETNASASASPAVQQSQQAQQPQQAQ) are compositionally biased toward low complexity. Polar residues-rich tracts occupy residues 527 to 541 (TSQT…TVSS) and 551 to 564 (IPSS…TQAV). Residues 565–590 (KTSTPIHSTPKSSSSSAKKTAAQLQQ) show a composition bias toward low complexity.

Expressed at low levels in excretory cell, pharynx, vulva, and posterior neurons in adults. Strongly expressed in the excretory cell and more weakly in the pharynx in larva. Embryonic expression in the excretory cell.

Its subcellular location is the nucleus. Transcription factor which binds to the 5'-CCATACATTA-3' motif found in the promoter region of pgp-12 and activates its expression in the excretory cell. The sequence is that of Transcription factor dcp-66 from Caenorhabditis elegans.